Here is a 183-residue protein sequence, read N- to C-terminus: Adenine phosphoribosyltransferase (183 aa).

Belongs to the purine/pyrimidine phosphoribosyltransferase family. As to quaternary structure, homodimer.

It is found in the cytoplasm. It catalyses the reaction AMP + diphosphate = 5-phospho-alpha-D-ribose 1-diphosphate + adenine. The protein operates within purine metabolism; AMP biosynthesis via salvage pathway; AMP from adenine: step 1/1. Catalyzes a salvage reaction resulting in the formation of AMP, that is energically less costly than de novo synthesis. In Escherichia coli (strain K12 / MC4100 / BW2952), this protein is Adenine phosphoribosyltransferase.